We begin with the raw amino-acid sequence, 42 residues long: Potassium channel toxin gamma-KTx 1.5 (42 aa).

Intrachain disulfides connect Cys-5-Cys-23, Cys-11-Cys-34, Cys-20-Cys-39, and Cys-24-Cys-41.

This sequence belongs to the ergtoxin family. Gamma-KTx 1 subfamily. Expressed by the venom gland.

The protein resides in the secreted. In terms of biological role, blocks Kv11/ERG potassium channels. The sequence is that of Potassium channel toxin gamma-KTx 1.5 from Centruroides limpidus (Mexican scorpion).